Consider the following 134-residue polypeptide: MAKGHTSRSYSQRYAKWQAKFNAFSNPTVASTILSNVSPVAQQNFQTNVPKFTSVNENVSAVLTQYGITGPNRAIYQGFGLKVARALNRIGSGPALVNMINGLKGYYISAFNANPQVLDAVVNIITGSPTGYVS.

Homodimer.

It is found in the virion. Functionally, self-assembles to form a helical, filamentous nucleocapsid. The capsid proteins wrap around the DNA and maintain it in an A-form by non-specific desolvation and specific coordination of the DNA phosphate groups by positively charged residues. This certainly protects the viral DNA under conditions such as the extreme desiccation of its host. This is Major capsid protein from Saccharolobus islandicus (Sulfolobus islandicus).